A 105-amino-acid polypeptide reads, in one-letter code: Pyrimidine/purine nucleoside phosphorylase (105 aa).

This sequence belongs to the nucleoside phosphorylase PpnP family.

The catalysed reaction is a purine D-ribonucleoside + phosphate = a purine nucleobase + alpha-D-ribose 1-phosphate. It carries out the reaction adenosine + phosphate = alpha-D-ribose 1-phosphate + adenine. The enzyme catalyses cytidine + phosphate = cytosine + alpha-D-ribose 1-phosphate. It catalyses the reaction guanosine + phosphate = alpha-D-ribose 1-phosphate + guanine. The catalysed reaction is inosine + phosphate = alpha-D-ribose 1-phosphate + hypoxanthine. It carries out the reaction thymidine + phosphate = 2-deoxy-alpha-D-ribose 1-phosphate + thymine. The enzyme catalyses uridine + phosphate = alpha-D-ribose 1-phosphate + uracil. It catalyses the reaction xanthosine + phosphate = alpha-D-ribose 1-phosphate + xanthine. Catalyzes the phosphorolysis of diverse nucleosides, yielding D-ribose 1-phosphate and the respective free bases. Can use uridine, adenosine, guanosine, cytidine, thymidine, inosine and xanthosine as substrates. Also catalyzes the reverse reactions. The protein is Pyrimidine/purine nucleoside phosphorylase of Albidiferax ferrireducens (strain ATCC BAA-621 / DSM 15236 / T118) (Rhodoferax ferrireducens).